Consider the following 522-residue polypeptide: Peptide chain release factor 3 (522 aa).

Residues 9–276 (KKRRTFAIIS…SFVNLAPAPQ (268 aa)) enclose the tr-type G domain. Residues 18 to 25 (SHPDAGKT), 86 to 90 (DTPGH), and 140 to 143 (NKLD) contribute to the GTP site.

This sequence belongs to the TRAFAC class translation factor GTPase superfamily. Classic translation factor GTPase family. PrfC subfamily.

The protein localises to the cytoplasm. Functionally, increases the formation of ribosomal termination complexes and stimulates activities of RF-1 and RF-2. It binds guanine nucleotides and has strong preference for UGA stop codons. It may interact directly with the ribosome. The stimulation of RF-1 and RF-2 is significantly reduced by GTP and GDP, but not by GMP. This is Peptide chain release factor 3 from Lactobacillus gasseri (strain ATCC 33323 / DSM 20243 / BCRC 14619 / CIP 102991 / JCM 1131 / KCTC 3163 / NCIMB 11718 / NCTC 13722 / AM63).